Here is a 283-residue protein sequence, read N- to C-terminus: Accumulation of dyads protein 2 (283 aa).

Residues methionine 1 to serine 41 form a disordered region. Topologically, residues methionine 1–asparagine 89 are cytoplasmic. Residues proline 90 to alanine 110 form a helical membrane-spanning segment. The Extracellular segment spans residues arginine 111–valine 120. Residues valine 121 to isoleucine 141 form a helical membrane-spanning segment. Over alanine 142–alanine 151 the chain is Cytoplasmic. Residues leucine 152 to isoleucine 172 form a helical membrane-spanning segment. At leucine 173–asparagine 185 the chain is on the extracellular side. Residues alanine 186–methionine 206 traverse the membrane as a helical segment. The Cytoplasmic portion of the chain corresponds to lysine 207–serine 208. Residues threonine 209–glycine 229 form a helical membrane-spanning segment. At histidine 230–alanine 240 the chain is on the extracellular side. Residues glycine 241–alanine 261 form a helical membrane-spanning segment. At threonine 262–phenylalanine 283 the chain is on the cytoplasmic side.

It belongs to the acetate uptake transporter (AceTr) (TC 2.A.96) family.

Its subcellular location is the cell membrane. It localises to the vacuole membrane. In terms of biological role, transporter protein required for ammonia export and acetate uptake and resistance. Necessary for up-regulation and down-regulation of meiotic plaque (MP) component levels in a dependency on external acetate. Has a role in ascus formation. This is Accumulation of dyads protein 2 (ADY2) from Saccharomyces cerevisiae (strain ATCC 204508 / S288c) (Baker's yeast).